Reading from the N-terminus, the 395-residue chain is MEGTQEALSGKMRLLFTPAARTSLLMLRLNEAALRALQECQQQQVRPVIAFQGHRGYLRFPGPGWSCLFSFIVSQCGQEGTNGGLDLVYQRLGRSGPNCLHCLGSLRERLTIWAAMDTIPAPLLAQEHLTEGTRESESWQDTGDEPEGHPQLAPDEVSDPLASHHEQSLPGSSSEPMAQWEMRNHTYLPSREPDQSLLSPASQKRLDKKRSAPITTEEPEEKRLRALPLASSPLQGLANQDSQEGEDWGQDEDEEGDEDGDSRLEQSLSAPSASESPSPEEVPDYLLQYRAIHSTEQQQAYEQDFETDYAEYRILHARVGAASQRFTELGAEIKRLQRGTPEHKVLEDKIVQEYKKFRKRYPSYREEKHRCEYLHQKLSHIKGLILEFEEKNRGS.

2 disordered regions span residues 129 to 177 (LTEG…SEPM) and 189 to 281 (PSRE…SPEE). Residue serine 242 is modified to Phosphoserine. Acidic residues predominate over residues 243–260 (QEGEDWGQDEDEEGDEDG). A compositionally biased stretch (low complexity) spans 269–279 (SAPSASESPSP). The 111-residue stretch at 283-393 (PDYLLQYRAI…LILEFEEKNR (111 aa)) folds into the OCEL domain.

It belongs to the ELL/occludin family. As to quaternary structure, component of the little elongation complex (LEC), at least composed of ELL (ELL, ELL2 or ELL3), ZC3H8, ICE1 and ICE2. Component of the super elongation complex (SEC), at least composed of EAF1, EAF2, CDK9, MLLT3/AF9, AFF (AFF1 or AFF4), the P-TEFb complex and ELL (ELL, ELL2 or ELL3). Interacts with AFF4. Actively expressed in embryonic stem cells (ES cells), while it is weakly expressed in differentiated cells.

It localises to the nucleus. In terms of biological role, enhancer-binding elongation factor that specifically binds enhancers in embryonic stem cells (ES cells), marks them, and is required for their future activation during stem cell specification. Elongation factor component of the super elongation complex (SEC), a complex required to increase the catalytic rate of RNA polymerase II transcription by suppressing transient pausing by the polymerase at multiple sites along the DNA. Component of the little elongation complex (LEC), a complex required to regulate small nuclear RNA (snRNA) gene transcription by RNA polymerase II and III. Does not only bind to enhancer regions of active genes, but also marks the enhancers that are in a poised or inactive state in ES cells and is required for establishing proper RNA polymerase II occupancy at developmentally regulated genes in a cohesin-dependent manner. Probably required for priming developmentally regulated genes for later recruitment of the super elongation complex (SEC), for transcriptional activation during differentiation. Required for recruitment of P-TEFb within SEC during differentiation. Probably preloaded on germ cell chromatin, suggesting that it may prime gene activation by marking enhancers as early as in the germ cells. Promoting epithelial-mesenchymal transition (EMT). The polypeptide is RNA polymerase II elongation factor ELL3 (Ell3) (Mus musculus (Mouse)).